Reading from the N-terminus, the 70-residue chain is Small ribosomal subunit protein bS21 (70 aa).

The interval 39–70 is disordered; it reads EKPTTERKRKKAAAVSRTRKRLRSQMLPKKLY. A compositionally biased stretch (basic residues) spans 45-61; sequence RKRKKAAAVSRTRKRLR.

It belongs to the bacterial ribosomal protein bS21 family.

In Ralstonia nicotianae (strain ATCC BAA-1114 / GMI1000) (Ralstonia solanacearum), this protein is Small ribosomal subunit protein bS21.